We begin with the raw amino-acid sequence, 469 residues long: Neuraminidase (469 aa).

Over 1-9 (MNPNQKIIT) the chain is Intravirion. A helical transmembrane segment spans residues 10–30 (IGSVSLIIATICFLMQIAILV). The interval 11-33 (GSVSLIIATICFLMQIAILVTTV) is involved in apical transport and lipid raft association. Topologically, residues 31–469 (TTVTLHFKQY…DGADINLMPI (439 aa)) are virion surface. The tract at residues 36-88 (HFKQYECDSPANNQVMPCEPIIIERNITEIVYLTNTTIEKEICPKLVEYRNWS) is hypervariable stalk region. Residues Asn-61, Asn-70, and Asn-86 are each glycosylated (N-linked (GlcNAc...) asparagine; by host). Residues 91 to 469 (QCKITGFAPF…DGADINLMPI (379 aa)) form a head of neuraminidase region. 8 disulfide bridges follow: Cys-92/Cys-417, Cys-124/Cys-129, Cys-183/Cys-230, Cys-232/Cys-237, Cys-278/Cys-291, Cys-280/Cys-289, Cys-318/Cys-337, and Cys-421/Cys-447. Substrate is bound at residue Arg-118. The N-linked (GlcNAc...) asparagine; by host glycan is linked to Asn-146. Asp-151 functions as the Proton donor/acceptor in the catalytic mechanism. Arg-152 serves as a coordination point for substrate. 2 N-linked (GlcNAc...) asparagine; by host glycosylation sites follow: Asn-200 and Asn-234. 276 to 277 (EE) is a substrate binding site. Arg-292 contacts substrate. Asp-293, Gly-297, and Asp-324 together coordinate Ca(2+). Arg-371 serves as a coordination point for substrate. Residue Asn-402 is glycosylated (N-linked (GlcNAc...) asparagine; by host). Tyr-406 (nucleophile) is an active-site residue.

Belongs to the glycosyl hydrolase 34 family. Homotetramer. Ca(2+) is required as a cofactor. In terms of processing, N-glycosylated.

It is found in the virion membrane. The protein resides in the host apical cell membrane. The catalysed reaction is Hydrolysis of alpha-(2-&gt;3)-, alpha-(2-&gt;6)-, alpha-(2-&gt;8)- glycosidic linkages of terminal sialic acid residues in oligosaccharides, glycoproteins, glycolipids, colominic acid and synthetic substrates.. Its activity is regulated as follows. Inhibited by the neuraminidase inhibitors zanamivir (Relenza) and oseltamivir (Tamiflu). These drugs interfere with the release of progeny virus from infected cells and are effective against all influenza strains. Resistance to neuraminidase inhibitors is quite rare. Catalyzes the removal of terminal sialic acid residues from viral and cellular glycoconjugates. Cleaves off the terminal sialic acids on the glycosylated HA during virus budding to facilitate virus release. Additionally helps virus spread through the circulation by further removing sialic acids from the cell surface. These cleavages prevent self-aggregation and ensure the efficient spread of the progeny virus from cell to cell. Otherwise, infection would be limited to one round of replication. Described as a receptor-destroying enzyme because it cleaves a terminal sialic acid from the cellular receptors. May facilitate viral invasion of the upper airways by cleaving the sialic acid moieties on the mucin of the airway epithelial cells. Likely to plays a role in the budding process through its association with lipid rafts during intracellular transport. May additionally display a raft-association independent effect on budding. Plays a role in the determination of host range restriction on replication and virulence. Sialidase activity in late endosome/lysosome traffic seems to enhance virus replication. This Aves (whales) protein is Neuraminidase.